The primary structure comprises 45 residues: Endo-1,4-beta-xylanase Xyn10A (45 aa).

Belongs to the glycosyl hydrolase 10 (cellulase F) family.

Its subcellular location is the secreted. The protein localises to the extracellular space. The catalysed reaction is Endohydrolysis of (1-&gt;4)-beta-D-xylosidic linkages in xylans.. The enzyme catalyses Endohydrolysis of (1-&gt;4)-beta-D-glucosidic linkages in cellulose, lichenin and cereal beta-D-glucans.. Its pathway is glycan degradation; xylan degradation. Its function is as follows. Has xylanase, avicelase and cellobiohydrolase activity. This Gloeophyllum trabeum (Brown rot fungus) protein is Endo-1,4-beta-xylanase Xyn10A.